Reading from the N-terminus, the 138-residue chain is Ribulose bisphosphate carboxylase small subunit (138 aa).

This sequence belongs to the RuBisCO small chain family. Heterohexadecamer of 8 large and 8 small subunits.

It localises to the plastid. The protein resides in the chloroplast. In terms of biological role, ruBisCO catalyzes two reactions: the carboxylation of D-ribulose 1,5-bisphosphate, the primary event in carbon dioxide fixation, as well as the oxidative fragmentation of the pentose substrate in the photorespiration process. Both reactions occur simultaneously and in competition at the same active site. Although the small subunit is not catalytic it is essential for maximal activity. The polypeptide is Ribulose bisphosphate carboxylase small subunit (Antithamnion sp. (Red alga)).